A 228-amino-acid chain; its full sequence is Carbonic anhydrase (228 aa).

Residues Cys-56, Asp-58, His-112, and Cys-115 each coordinate Zn(2+).

It belongs to the beta-class carbonic anhydrase family. The cofactor is Zn(2+).

It carries out the reaction hydrogencarbonate + H(+) = CO2 + H2O. Functionally, catalyzes the reversible hydration of CO(2) to H(2)CO(3). The main role may be to provide inorganic carbon for the bicarbonate-dependent carboxylation reactions catalyzed by pyruvate carboxylase, acetyl-CoA carboxylase and carbamoyl-phosphate synthetase. Involved in osmoadaptation. This chain is Carbonic anhydrase, found in Emericella nidulans (strain FGSC A4 / ATCC 38163 / CBS 112.46 / NRRL 194 / M139) (Aspergillus nidulans).